A 428-amino-acid polypeptide reads, in one-letter code: Protein ECERIFERUM 26 (428 aa).

Positions 1–36 (MGRSQEQGQGQGPVHSIRLSTVGATRPTETGTTHEP) are disordered. The span at 21 to 36 (TVGATRPTETGTTHEP) shows a compositional bias: low complexity.

Belongs to the plant acyltransferase family. In terms of tissue distribution, highly expressed in leaves.

The protein resides in the cytoplasm. It is found in the cytosol. Involved in biosynthesis of the epicuticular wax. Plays a role in very-long-chain fatty acid (VLCFA) biosynthesis and is required for C30 fatty acid elongation in leaf. Despite its classification as a BAHD acyltransferase based on sequence homology, CER26 does not seem to share the catalytic mechanism of the members of the BAHD family. This chain is Protein ECERIFERUM 26 (CER26), found in Arabidopsis thaliana (Mouse-ear cress).